We begin with the raw amino-acid sequence, 364 residues long: Chorismate synthase (364 aa).

The interval 41 to 60 (MQHDLDRRRPGTSRYTTARR) is disordered. Positions 48 and 54 each coordinate NADP(+). Residues 125–127 (RSS), 238–239 (NA), glycine 278, 293–297 (KPTSS), and arginine 319 contribute to the FMN site.

This sequence belongs to the chorismate synthase family. In terms of assembly, homotetramer. Requires FMNH2 as cofactor.

It carries out the reaction 5-O-(1-carboxyvinyl)-3-phosphoshikimate = chorismate + phosphate. It participates in metabolic intermediate biosynthesis; chorismate biosynthesis; chorismate from D-erythrose 4-phosphate and phosphoenolpyruvate: step 7/7. Its function is as follows. Catalyzes the anti-1,4-elimination of the C-3 phosphate and the C-6 proR hydrogen from 5-enolpyruvylshikimate-3-phosphate (EPSP) to yield chorismate, which is the branch point compound that serves as the starting substrate for the three terminal pathways of aromatic amino acid biosynthesis. This reaction introduces a second double bond into the aromatic ring system. The protein is Chorismate synthase of Shewanella putrefaciens (strain CN-32 / ATCC BAA-453).